We begin with the raw amino-acid sequence, 381 residues long: L-lactate dehydrogenase (381 aa).

An FMN hydroxy acid dehydrogenase domain is found at 1-380; the sequence is MIISSTNDYR…TRDALVDLSK (380 aa). Tyrosine 24 lines the substrate pocket. Positions 106 and 127 each coordinate FMN. Tyrosine 129 contacts substrate. Threonine 155 serves as a coordination point for FMN. Position 164 (arginine 164) interacts with substrate. Lysine 251 contacts FMN. Catalysis depends on histidine 275, which acts as the Proton acceptor. Substrate is bound at residue arginine 278. An FMN-binding site is contributed by 306 to 330; the sequence is DSGIRNGLDIVRMLALGADATMLGR.

Belongs to the FMN-dependent alpha-hydroxy acid dehydrogenase family. Requires FMN as cofactor.

Its subcellular location is the cell inner membrane. The catalysed reaction is (S)-lactate + A = pyruvate + AH2. Its function is as follows. Catalyzes the conversion of L-lactate to pyruvate. Is coupled to the respiratory chain. This chain is L-lactate dehydrogenase, found in Actinobacillus pleuropneumoniae serotype 3 (strain JL03).